The following is a 597-amino-acid chain: Exochitinase 1 (597 aa).

Positions 1-29 form a signal peptide, or 32; sequence MDRFRPLAVLIAAALTLSGTTALSSAARA. The region spanning 172 to 253 is the Fibronectin type-III domain; it reads PPTGLRTGSV…ATVTATTAPG (82 aa). The 334-residue stretch at 264–597 folds into the GH18 domain; that stretch reads HALVGYLHAS…FQRTFDGYFG (334 aa). Catalysis depends on Glu384, which acts as the Proton donor.

Belongs to the glycosyl hydrolase 18 family. Chitinase class II subfamily. In terms of processing, the N-terminus is blocked.

The enzyme catalyses Random endo-hydrolysis of N-acetyl-beta-D-glucosaminide (1-&gt;4)-beta-linkages in chitin and chitodextrins.. With respect to regulation, inhibited by the pseudosugar allosamidin A. In terms of biological role, exochitinase that generates exclusively chitobiose from chitotetraose, chitohexaose, and colloidal high-molecular mass chitin. The polypeptide is Exochitinase 1 (chi01) (Streptomyces olivaceoviridis (Streptomyces corchorusii)).